Consider the following 505-residue polypeptide: Pup deamidase/depupylase (505 aa).

6–10 serves as a coordination point for ATP; it reads GTEVE. Residues E8 and Y93 each contribute to the Mg(2+) site. The active-site Proton acceptor is D95. Residue E100 participates in Mg(2+) binding. 102 to 103 contacts ATP; that stretch reads SA. Mg(2+) is bound at residue H156. 2 residues coordinate ATP: N158 and R240. H242 is a binding site for Mg(2+).

Belongs to the Pup ligase/Pup deamidase family. Pup deamidase subfamily. Interacts with the prokaryotic ubiquitin-like protein Pup. The cofactor is ATP.

It carries out the reaction [prokaryotic ubiquitin-like protein]-C-terminal-L-glutamine + H2O = [prokaryotic ubiquitin-like protein]-C-terminal-L-glutamate + NH4(+). It functions in the pathway protein degradation; proteasomal Pup-dependent pathway. Its function is as follows. Specifically catalyzes the deamidation of the C-terminal glutamine of the prokaryotic ubiquitin-like protein Pup to glutamate, thereby rendering Pup competent for conjugation. Also displays depupylase (DPUP) activity, removing conjugated Pup from target proteins; is thus involved in the recycling of Pup and may function similarly to deubiquitinases (DUBs) in eukaryotes to prevent or promote proteasomal degradation of certain proteins. The sequence is that of Pup deamidase/depupylase (dop) from Mycobacterium tuberculosis (strain CDC 1551 / Oshkosh).